A 199-amino-acid chain; its full sequence is B3 domain-containing protein Os06g0107800 (199 aa).

Residues 13–32 (QLQGGGGGHGGGGGGGGGER) form a disordered region. Residues 15–29 (QGGGGGHGGGGGGGG) are compositionally biased toward gly residues. The segment at residues 37–141 (FEKVVTPSDV…RLFIDCRKRA (105 aa)) is a DNA-binding region (TF-B3).

The protein localises to the nucleus. This chain is B3 domain-containing protein Os06g0107800, found in Oryza sativa subsp. japonica (Rice).